An 896-amino-acid polypeptide reads, in one-letter code: Chromatin assembly factor 1 subunit A-A (896 aa).

Disordered regions lie at residues 1-23, 185-377, and 552-610; these read MPGKEAAVNVMQSSTKSNTKKMV, TSTS…EEEK, and DSDE…DPEN. Over residues 10-21 the composition is skewed to polar residues; sequence VMQSSTKSNTKK. The segment covering 211–226 has biased composition (low complexity); that stretch reads ASVSSSSSPVSLSSPD. Residues 227-236 are compositionally biased toward polar residues; the sequence is AQTGSQFRNR. Residues 237 to 246 are compositionally biased toward low complexity; sequence SSPSTSTTPT. The segment covering 255 to 284 has biased composition (basic and acidic residues); the sequence is SADKNKTKDKDKQRQAEKEERERAKKEARS. Residues 285-302 show a composition bias toward basic residues; the sequence is AKKKKRQGLLKNLQRKRG. Residues 308-377 are compositionally biased toward basic and acidic residues; the sequence is SGKEYKKEKK…EEKRLKEEEK (70 aa). Acidic residues-rich tracts occupy residues 552 to 563, 572 to 586, and 595 to 607; these read DSDEEWEEEEPG, ENDDDPKEDDEDDDG, and SDDEGVSDEECTD. The interval 642-678 is necessary for homodimerization, competence for chromatin assembly; that stretch reads CVWWDSKASEISLLQKFSACILESPAVDEELAQEISS. The tract at residues 724 to 743 is disordered; sequence SDAAGNESTSPNVTPQTPSN. The segment covering 729-743 has biased composition (polar residues); it reads NESTSPNVTPQTPSN.

This sequence belongs to the CHAF1A family. Homodimer.

It localises to the nucleus. Its function is as follows. Involved in chromatin assembly in DNA replication and DNA repair. This Xenopus laevis (African clawed frog) protein is Chromatin assembly factor 1 subunit A-A (chaf1a-a).